Here is a 142-residue protein sequence, read N- to C-terminus: Large ribosomal subunit protein uL11 (142 aa).

The segment at 86–105 is disordered; that stretch reads LKSGSKEPGKQSAGQISRAK.

It belongs to the universal ribosomal protein uL11 family. As to quaternary structure, part of the ribosomal stalk of the 50S ribosomal subunit. Interacts with L10 and the large rRNA to form the base of the stalk. L10 forms an elongated spine to which L12 dimers bind in a sequential fashion forming a multimeric L10(L12)X complex. Post-translationally, one or more lysine residues are methylated.

Forms part of the ribosomal stalk which helps the ribosome interact with GTP-bound translation factors. This Chelativorans sp. (strain BNC1) protein is Large ribosomal subunit protein uL11.